The following is a 202-amino-acid chain: NADH:(hydroxy)cinnamate reductase subunit CrdA (202 aa).

The protein belongs to the NADH-dependent flavin reductase family. As to quaternary structure, NADH:(hydroxy)cinnamate reductase Crd is a heterodimer composed of CrdA and CrdB subunits, encoded by adjacent genes. Requires FMN as cofactor.

Functionally, component of the NADH:(hydroxy)cinnamate reductase. CrdA is probably reduced by NADH and then transfers the electrons to the catalytic center of CrdB. Is likely involved in protecting V.ruber from (hydroxy)cinnamate poisoning. The chain is NADH:(hydroxy)cinnamate reductase subunit CrdA from Vibrio ruber (strain DSM 16370 / JCM 11486 / BCRC 17186 / CECT 7878 / LMG 23124 / VR1).